The sequence spans 285 residues: Pantothenate synthetase (285 aa).

30-37 (MGNLHDGH) serves as a coordination point for ATP. Histidine 37 serves as the catalytic Proton donor. Glutamine 61 lines the (R)-pantoate pocket. A beta-alanine-binding site is contributed by glutamine 61. 148-151 (GEKD) contributes to the ATP binding site. Residue glutamine 154 participates in (R)-pantoate binding. ATP is bound at residue 185 to 188 (RSSR).

It belongs to the pantothenate synthetase family. In terms of assembly, homodimer.

Its subcellular location is the cytoplasm. It catalyses the reaction (R)-pantoate + beta-alanine + ATP = (R)-pantothenate + AMP + diphosphate + H(+). It functions in the pathway cofactor biosynthesis; (R)-pantothenate biosynthesis; (R)-pantothenate from (R)-pantoate and beta-alanine: step 1/1. Functionally, catalyzes the condensation of pantoate with beta-alanine in an ATP-dependent reaction via a pantoyl-adenylate intermediate. This Alcanivorax borkumensis (strain ATCC 700651 / DSM 11573 / NCIMB 13689 / SK2) protein is Pantothenate synthetase.